The sequence spans 203 residues: A-type ATP synthase subunit E (203 aa).

Belongs to the V-ATPase E subunit family. In terms of assembly, has multiple subunits with at least A(3), B(3), C, D, E, F, H, I and proteolipid K(x).

The protein resides in the cell membrane. Component of the A-type ATP synthase that produces ATP from ADP in the presence of a proton gradient across the membrane. The sequence is that of A-type ATP synthase subunit E from Thermococcus sibiricus (strain DSM 12597 / MM 739).